The following is a 926-amino-acid chain: DNA mismatch repair protein MutS (926 aa).

The segment at 1-60 (MAASQNPIQGSLFGGNEESDLNKAEKLKGSERSNVNLSHQQLKEDASLRPRIKQTPKNPN) is disordered. Residues 20–31 (DLNKAEKLKGSE) show a composition bias toward basic and acidic residues. ATP is bound at residue 726-733 (GPNASGKS).

It belongs to the DNA mismatch repair MutS family.

In terms of biological role, this protein is involved in the repair of mismatches in DNA. It is possible that it carries out the mismatch recognition step. This protein has a weak ATPase activity. This is DNA mismatch repair protein MutS from Prochlorococcus marinus (strain NATL2A).